The sequence spans 741 residues: Cytosolic phospholipase A2 (741 aa).

The 116-residue stretch at 1-116 (MSNIIVEHQY…KVAQMEHVTL (116 aa)) folds into the C2 domain. The phospholipid binding stretch occupies residues 1-172 (MSNIIVEHQY…IKKLLKMENP (172 aa)). Ca(2+) contacts are provided by Asp-34, Thr-35, Asp-37, Asn-59, Asp-87, Ala-88, and Asn-89. One can recognise a PLA2c domain in the interval 132-729 (VCASTDLRFS…SLSEIENKKF (598 aa)). The active-site Nucleophile is Ser-223. The disordered stretch occupies residues 406–453 (TSSSTMEEELEQIKPEHIVGDDSADNEEETQRGGTESADAEDERQRHA). The segment covering 416–425 (EQIKPEHIVG) has biased composition (basic and acidic residues). Phosphoserine; by MAPK is present on Ser-498. The active-site Proton acceptor is the Asp-540.

Post-translationally, activated by phosphorylation on a serine residue.

It is found in the cytoplasm. The protein resides in the cytoplasmic vesicle. It carries out the reaction a 1,2-diacyl-sn-glycero-3-phosphocholine + H2O = a 1-acyl-sn-glycero-3-phosphocholine + a fatty acid + H(+). The enzyme catalyses a 1-acyl-sn-glycero-3-phosphocholine + H2O = sn-glycerol 3-phosphocholine + a fatty acid + H(+). Its activity is regulated as follows. Stimulated by agonists such as ATP, EGF, thrombin and bradykinin as well as by cytosolic Ca(2+). Functionally, selectively hydrolyzes arachidonyl phospholipids in the sn-2 position releasing arachidonic acid. Together with its lysophospholipid activity, it is implicated in the initiation of the inflammatory response. The chain is Cytosolic phospholipase A2 (pla2g4a) from Danio rerio (Zebrafish).